The following is a 2958-amino-acid chain: Protein CSF1 (2958 aa).

The Cytoplasmic portion of the chain corresponds to 1–17; that stretch reads MEAISQLRGVPLTHQKD. The chain crosses the membrane as a helical; Signal-anchor for type II membrane protein span at residues 18–38; it reads FSWVFLVDWILTVVVCLTMIF. Topologically, residues 39–2958 are extracellular; the sequence is YMGRIYAYLV…QYVKILDDTH (2920 aa). Residues asparagine 82, asparagine 117, asparagine 144, asparagine 271, asparagine 478, asparagine 530, asparagine 816, asparagine 821, asparagine 839, and asparagine 892 are each glycosylated (N-linked (GlcNAc...) asparagine). Residues 813–834 are disordered; it reads GYQNSSLKNESEDKGPMKRSDL. The span at 821-834 shows a compositional bias: basic and acidic residues; sequence NESEDKGPMKRSDL. Positions 1175–1196 are disordered; it reads MEPSRASFSEDDNDEEADPSSF. Residues 1183–1192 show a composition bias toward acidic residues; that stretch reads SEDDNDEEAD. Asparagine 1309, asparagine 1368, asparagine 1453, asparagine 1785, asparagine 1921, asparagine 2130, asparagine 2146, asparagine 2280, asparagine 2337, asparagine 2520, asparagine 2578, asparagine 2719, and asparagine 2869 each carry an N-linked (GlcNAc...) asparagine glycan.

It belongs to the CSF1 family. As to quaternary structure, interacts with MCD4; CSF1 channels phosphatidylethanolamine to MCD4 in the endoplasmic reticulum at contact sites to support GPI anchor biosynthesis.

It localises to the cell membrane. The protein localises to the endoplasmic reticulum membrane. Its subcellular location is the mitochondrion membrane. Functionally, tube-forming lipid transport protein which provides phosphatidylethanolamine for glycosylphosphatidylinositol (GPI) anchor synthesis in the endoplasmic reticulum. Required for the glucose and other nutrients uptake at low temperature. In Saccharomyces cerevisiae (strain ATCC 204508 / S288c) (Baker's yeast), this protein is Protein CSF1.